We begin with the raw amino-acid sequence, 41 residues long: Pi-stichotoxin-Hcr5c (41 aa).

Intrachain disulfides connect Cys4–Cys37, Cys6–Cys30, and Cys20–Cys38.

This sequence belongs to the sea anemone type 3 (BDS) potassium channel toxin family.

It localises to the secreted. The protein localises to the nematocyst. Functionally, weakly and reversibly inhibits rat homomeric ASIC1 (isoform ASIC1a) (IC(50)=4.95 uM), and ASIC3 (IC(50)=17 uM). ASIC1a current inhibition and ASIC3 transient current inhibition are not complete, and reach a maximum of 70% inhibition and 80%, respectively. This Radianthus crispa (Leathery sea anemone) protein is Pi-stichotoxin-Hcr5c.